A 324-amino-acid polypeptide reads, in one-letter code: Mitochondrial oxaloacetate transport protein (324 aa).

Solcar repeat units lie at residues 20–111 (ISKF…IRSS), 126–218 (QSVG…AKNI), and 227–312 (DGPA…TMKL). Transmembrane regions (helical) follow at residues 26 to 46 (FVAGGLAACIAVTVTNPIELI), 79 to 99 (GIKGLQKGLNAAYIYQIGLNG), 132 to 152 (VFSGAASGIIGAVIGSPLFLV), 193 to 213 (GIDAAILRTGAGSSVQLPIYN), 233 to 253 (LTASTISGLGVAVVMNPWDVI), and 284 to 305 (LYKGFAAQVFRIAPHTIMCLTF).

The protein belongs to the mitochondrial carrier (TC 2.A.29) family.

It localises to the mitochondrion inner membrane. It carries out the reaction a dicarboxylate(in) + sulfate(out) = a dicarboxylate(out) + sulfate(in). The catalysed reaction is (2S)-2-isopropylmalate(in) + sulfate(out) = (2S)-2-isopropylmalate(out) + sulfate(in). The enzyme catalyses (2R,3S)-3-isopropylmalate(in) + sulfate(out) = (2R,3S)-3-isopropylmalate(out) + sulfate(in). It catalyses the reaction malonate(in) + sulfate(out) = malonate(out) + sulfate(in). It carries out the reaction oxaloacetate(in) + sulfate(out) = oxaloacetate(out) + sulfate(in). The catalysed reaction is thiosulfate(in) + sulfate(out) = thiosulfate(out) + sulfate(in). Its activity is regulated as follows. Inhibited by alpha-keto isocaproate, an intermediate of leucine biosynthesis pathway. Functionally, antiporter that exchanges dicarboxylates and sulfur oxoanions across the inner membrane of mitochondria. Exports alpha-isopropylmalate from mitochondrial matrix to the cytosol, where it serves as a precursor for leucine biosynthesis. The polypeptide is Mitochondrial oxaloacetate transport protein (OAC1) (Saccharomyces cerevisiae (strain ATCC 204508 / S288c) (Baker's yeast)).